Here is a 117-residue protein sequence, read N- to C-terminus: UPF0342 protein OB1136 (117 aa).

This sequence belongs to the UPF0342 family.

In Oceanobacillus iheyensis (strain DSM 14371 / CIP 107618 / JCM 11309 / KCTC 3954 / HTE831), this protein is UPF0342 protein OB1136.